Reading from the N-terminus, the 188-residue chain is NADH-quinone oxidoreductase subunit I 2 (188 aa).

2 4Fe-4S ferredoxin-type domains span residues 56 to 88 (HFLKRDDEGEIKCVACELCARICPCDCIEVVPY) and 98 to 127 (AKFEIDTARCLFCGLCEDACPADAIALGQQ). The [4Fe-4S] cluster site is built by C68, C71, C74, C78, C107, C110, C113, and C117.

This sequence belongs to the complex I 23 kDa subunit family. In terms of assembly, NDH-1 is composed of 14 different subunits. Subunits NuoA, H, J, K, L, M, N constitute the membrane sector of the complex. The cofactor is [4Fe-4S] cluster.

It localises to the cell inner membrane. The catalysed reaction is a quinone + NADH + 5 H(+)(in) = a quinol + NAD(+) + 4 H(+)(out). In terms of biological role, NDH-1 shuttles electrons from NADH, via FMN and iron-sulfur (Fe-S) centers, to quinones in the respiratory chain. The immediate electron acceptor for the enzyme in this species is believed to be ubiquinone. Couples the redox reaction to proton translocation (for every two electrons transferred, four hydrogen ions are translocated across the cytoplasmic membrane), and thus conserves the redox energy in a proton gradient. In Rhizobium meliloti (strain 1021) (Ensifer meliloti), this protein is NADH-quinone oxidoreductase subunit I 2.